Reading from the N-terminus, the 389-residue chain is Glutamate 5-kinase (389 aa).

Lys26 is an ATP binding site. Substrate-binding residues include Ser66, Asp153, and Asn167. ATP is bound at residue 187-188 (TD). The PUA domain occupies 293 to 371 (AGTLFLDQGA…EQIEWILGHR (79 aa)).

The protein belongs to the glutamate 5-kinase family.

It localises to the cytoplasm. It catalyses the reaction L-glutamate + ATP = L-glutamyl 5-phosphate + ADP. Its pathway is amino-acid biosynthesis; L-proline biosynthesis; L-glutamate 5-semialdehyde from L-glutamate: step 1/2. In terms of biological role, catalyzes the transfer of a phosphate group to glutamate to form L-glutamate 5-phosphate. The chain is Glutamate 5-kinase from Rhodopirellula baltica (strain DSM 10527 / NCIMB 13988 / SH1).